Reading from the N-terminus, the 366-residue chain is MTPEHLPTEQYEAQLAEKVVRLQSMMAPFSNLVPEVFRSPVSHYRMRAEFRIWHDGDDLYHIIFDQQTKSRIRVDSFPAASELINQLMTAMIAGVRNNPFLRHKLFQIDYLTTLSNQAVVSLLYHKKLDDEWRQEAEALRDALRAQNLNVHLIGRATKTKIELDQDYIDERLPVAGKEMIYRQVENSFTQPNAAMNIQMLEWALDVTKGSKGDLLELYCGNGNFSLALARNFDRVLATEIAKPSVAAAQYNIAANHIDNVQIIRMAAEEFTQAMNGVREFNRLQGIDLKSYQCETIFVDPPRSGLDSETEKMVQAYPRILYISCNPETLCKNLETLSQTHKVERLALFDQFPYTHHMECGVLLTAK.

Gln-190, Tyr-218, Asn-223, Glu-239, and Asp-299 together coordinate S-adenosyl-L-methionine. The active-site Nucleophile is the Cys-324. Glu-358 functions as the Proton acceptor in the catalytic mechanism.

Belongs to the class I-like SAM-binding methyltransferase superfamily. RNA M5U methyltransferase family. TrmA subfamily.

It catalyses the reaction uridine(54) in tRNA + S-adenosyl-L-methionine = 5-methyluridine(54) in tRNA + S-adenosyl-L-homocysteine + H(+). It carries out the reaction uridine(341) in tmRNA + S-adenosyl-L-methionine = 5-methyluridine(341) in tmRNA + S-adenosyl-L-homocysteine + H(+). In terms of biological role, dual-specificity methyltransferase that catalyzes the formation of 5-methyluridine at position 54 (m5U54) in all tRNAs, and that of position 341 (m5U341) in tmRNA (transfer-mRNA). This Escherichia coli O81 (strain ED1a) protein is tRNA/tmRNA (uracil-C(5))-methyltransferase.